A 140-amino-acid polypeptide reads, in one-letter code: Transmembrane protein 107 (140 aa).

Helical transmembrane passes span 7–27 and 53–73; these read LVPSRFLTLLAHLVVVITLFW and LVAALSVTLGLFAVELAGFLS. An N-linked (GlcNAc...) asparagine glycan is attached at asparagine 79. The next 2 membrane-spanning stretches (helical) occupy residues 83 to 103 and 113 to 133; these read SLISIGAHCSASVALSFFIFE and IFVFCSALPAVTEMALFVTVF.

Part of the tectonic-like complex (also named B9 complex). Interacts with TMEM237, TMEM231, MKS1 and TMEM216.

Its subcellular location is the membrane. It is found in the cell projection. It localises to the cilium. Functionally, plays a role in cilia formation and embryonic patterning. Requires for normal Sonic hedgehog (Shh) signaling in the neural tube and acts in combination with GLI2 and GLI3 to pattern ventral and intermediate neuronal cell types. During ciliogenesis regulates the ciliary transition zone localization of some MKS complex proteins. The polypeptide is Transmembrane protein 107 (Homo sapiens (Human)).